Consider the following 336-residue polypeptide: tRNA N6-adenosine threonylcarbamoyltransferase (336 aa).

Fe cation is bound by residues histidine 112 and histidine 116. Residues 136–140 (LVSGG), aspartate 169, glycine 182, and asparagine 276 each bind substrate. Residue aspartate 304 coordinates Fe cation.

This sequence belongs to the KAE1 / TsaD family. Requires Fe(2+) as cofactor.

Its subcellular location is the cytoplasm. The enzyme catalyses L-threonylcarbamoyladenylate + adenosine(37) in tRNA = N(6)-L-threonylcarbamoyladenosine(37) in tRNA + AMP + H(+). In terms of biological role, required for the formation of a threonylcarbamoyl group on adenosine at position 37 (t(6)A37) in tRNAs that read codons beginning with adenine. Is involved in the transfer of the threonylcarbamoyl moiety of threonylcarbamoyl-AMP (TC-AMP) to the N6 group of A37, together with TsaE and TsaB. TsaD likely plays a direct catalytic role in this reaction. This Francisella tularensis subsp. tularensis (strain FSC 198) protein is tRNA N6-adenosine threonylcarbamoyltransferase.